The primary structure comprises 704 residues: Ribosomal RNA large subunit methyltransferase K/L (704 aa).

This sequence belongs to the methyltransferase superfamily. RlmKL family.

It localises to the cytoplasm. It carries out the reaction guanosine(2445) in 23S rRNA + S-adenosyl-L-methionine = N(2)-methylguanosine(2445) in 23S rRNA + S-adenosyl-L-homocysteine + H(+). The catalysed reaction is guanosine(2069) in 23S rRNA + S-adenosyl-L-methionine = N(2)-methylguanosine(2069) in 23S rRNA + S-adenosyl-L-homocysteine + H(+). In terms of biological role, specifically methylates the guanine in position 2445 (m2G2445) and the guanine in position 2069 (m7G2069) of 23S rRNA. The sequence is that of Ribosomal RNA large subunit methyltransferase K/L from Alcanivorax borkumensis (strain ATCC 700651 / DSM 11573 / NCIMB 13689 / SK2).